Consider the following 674-residue polypeptide: DNA ligase (674 aa).

Residues 35–39 (DAEYD), 82–83 (SL), and E116 each bind NAD(+). The N6-AMP-lysine intermediate role is filled by K118. Positions 139, 174, 282, and 306 each coordinate NAD(+). Residues C400, C403, C418, and C424 each contribute to the Zn(2+) site. One can recognise a BRCT domain in the interval 593 to 674 (SYVSLIHGKT…WLQYIQPNKV (82 aa)).

Belongs to the NAD-dependent DNA ligase family. LigA subfamily. It depends on Mg(2+) as a cofactor. The cofactor is Mn(2+).

It carries out the reaction NAD(+) + (deoxyribonucleotide)n-3'-hydroxyl + 5'-phospho-(deoxyribonucleotide)m = (deoxyribonucleotide)n+m + AMP + beta-nicotinamide D-nucleotide.. DNA ligase that catalyzes the formation of phosphodiester linkages between 5'-phosphoryl and 3'-hydroxyl groups in double-stranded DNA using NAD as a coenzyme and as the energy source for the reaction. It is essential for DNA replication and repair of damaged DNA. The protein is DNA ligase of Ehrlichia ruminantium (strain Welgevonden).